The sequence spans 578 residues: PTS system fructose-specific EIIB'BC component (578 aa).

PTS EIIB type-2 domains lie at 1 to 99 (MSKI…EALA) and 119 to 214 (VVAI…AALA). Cys125 serves as the catalytic Phosphocysteine intermediate; for EIIB activity. Cys125 carries the post-translational modification Phosphocysteine; by EIIA. The PTS EIIC type-2 domain maps to 241–576 (PYMHLLTGVS…KKPIPAEERA (336 aa)). The next 9 membrane-spanning stretches (helical) occupy residues 251–271 (YMLP…VFGI), 284–304 (LMAI…AGFI), 319–339 (IGGM…VAGF), 364–384 (VLIL…YVVG), 405–425 (NAVV…GGPI), 428–450 (AAYT…AVMA), 477–497 (AGGA…IPFA), 518–538 (LSMA…VLAI), and 545–565 (LGLY…LLIA).

It localises to the cell inner membrane. It catalyses the reaction D-fructose(out) + N(pros)-phospho-L-histidyl-[protein] = D-fructose 1-phosphate(in) + L-histidyl-[protein]. Its function is as follows. The phosphoenolpyruvate-dependent sugar phosphotransferase system (sugar PTS), a major carbohydrate active transport system, catalyzes the phosphorylation of incoming sugar substrates concomitantly with their translocation across the cell membrane. The enzyme II FruAB PTS system is involved in fructose transport. This is PTS system fructose-specific EIIB'BC component from Rhodobacter capsulatus (Rhodopseudomonas capsulata).